Consider the following 136-residue polypeptide: Succinate dehydrogenase 2 membrane subunit SdhC (136 aa).

3 consecutive transmembrane segments (helical) span residues 32–52 (RISG…AAML), 70–90 (IVGL…LNGI), and 109–129 (LWII…VVGI). Residue histidine 85 participates in heme binding.

Belongs to the cytochrome b560 family. As to quaternary structure, part of an enzyme complex containing four subunits: a flavoprotein (SdhA), an iron-sulfur protein (SdhB), plus two membrane-anchoring proteins (SdhC and SdhD). Heme is required as a cofactor.

It localises to the cell membrane. Membrane-anchoring subunit of succinate dehydrogenase 2 (Sdh2). Sdh2 may catalyze the two-electron oxidation of succinate to fumarate with a corresponding reduction of quinone to quinol under low oxygen conditions, when the primary aerobic succinate dehydrogenase (Sdh1) is inhibited. Sdh2 seems to be the generator of the proton motive force (PMF) under hypoxia. This chain is Succinate dehydrogenase 2 membrane subunit SdhC, found in Mycobacterium tuberculosis (strain ATCC 25618 / H37Rv).